Reading from the N-terminus, the 340-residue chain is Guanine nucleotide-binding protein G(I)/G(S)/G(T) subunit beta-1 (340 aa).

7 WD repeats span residues 53 to 83 (GHLA…IVWD), 95 to 125 (LRSS…SIYS), 141 to 170 (GHTG…ALWD), 182 to 212 (GHTG…KLWD), 224 to 254 (GHES…RLFD), 268 to 298 (NIIC…NVWD), and 310 to 340 (GHDN…KIWN).

Belongs to the WD repeat G protein beta family. In terms of assembly, g proteins are composed of 3 units, alpha, beta and gamma.

Functionally, guanine nucleotide-binding proteins (G proteins) are involved as a modulator or transducer in various transmembrane signaling systems. The beta and gamma chains are required for the GTPase activity, for replacement of GDP by GTP, and for G protein-effector interaction. The protein is Guanine nucleotide-binding protein G(I)/G(S)/G(T) subunit beta-1 (GBETA1) of Homarus americanus (American lobster).